The primary structure comprises 200 residues: uncharacterized protein (200 aa).

A helical membrane pass occupies residues 104–124; it reads SNLLICFLFLCGLYHISVFTG.

It localises to the membrane. This is an uncharacterized protein from Escherichia coli (strain K12).